A 100-amino-acid polypeptide reads, in one-letter code: Small ribosomal subunit protein uS14 (100 aa).

Belongs to the universal ribosomal protein uS14 family. In terms of assembly, part of the 30S ribosomal subunit. Contacts proteins S3 and S10.

In terms of biological role, binds 16S rRNA, required for the assembly of 30S particles and may also be responsible for determining the conformation of the 16S rRNA at the A site. This Gloeothece citriformis (strain PCC 7424) (Cyanothece sp. (strain PCC 7424)) protein is Small ribosomal subunit protein uS14.